The primary structure comprises 161 residues: Transcription elongation factor GreB (161 aa).

It belongs to the GreA/GreB family. GreB subfamily.

Necessary for efficient RNA polymerase transcription elongation past template-encoded arresting sites. The arresting sites in DNA have the property of trapping a certain fraction of elongating RNA polymerases that pass through, resulting in locked ternary complexes. Cleavage of the nascent transcript by cleavage factors such as GreA or GreB allows the resumption of elongation from the new 3'terminus. GreB releases sequences of up to 9 nucleotides in length. This is Transcription elongation factor GreB from Vibrio cholerae serotype O1 (strain ATCC 39315 / El Tor Inaba N16961).